The chain runs to 248 residues: Small ribosomal subunit protein eS6 (248 aa).

Residues 213–248 (LLAQRKKESKAKREEAKRRRSASMRESKSSISSDKK) form a disordered region. The segment covering 223-248 (AKREEAKRRRSASMRESKSSISSDKK) has biased composition (basic and acidic residues).

This sequence belongs to the eukaryotic ribosomal protein eS6 family. As to quaternary structure, component of the small ribosomal subunit. Part of the small subunit (SSU) processome, composed of more than 70 proteins and the RNA chaperone small nucleolar RNA (snoRNA) U3. Post-translationally, ribosomal protein S6 is the major substrate of protein kinases in eukaryote ribosomes.

It localises to the cytoplasm. The protein resides in the nucleus. Its subcellular location is the nucleolus. Functionally, component of the 40S small ribosomal subunit. Plays an important role in controlling cell growth and proliferation through the selective translation of particular classes of mRNA. Part of the small subunit (SSU) processome, first precursor of the small eukaryotic ribosomal subunit. During the assembly of the SSU processome in the nucleolus, many ribosome biogenesis factors, an RNA chaperone and ribosomal proteins associate with the nascent pre-rRNA and work in concert to generate RNA folding, modifications, rearrangements and cleavage as well as targeted degradation of pre-ribosomal RNA by the RNA exosome. The chain is Small ribosomal subunit protein eS6 (RpS6) from Glossina morsitans morsitans (Savannah tsetse fly).